A 327-amino-acid polypeptide reads, in one-letter code: Glycerol-3-phosphate dehydrogenase [NAD(P)+] (327 aa).

NADPH is bound by residues Ser10, Phe11, Arg31, and Lys108. 3 residues coordinate sn-glycerol 3-phosphate: Lys108, Gly136, and Ser138. Ala140 provides a ligand contact to NADPH. Positions 191, 246, 256, 257, and 258 each coordinate sn-glycerol 3-phosphate. Lys191 functions as the Proton acceptor in the catalytic mechanism. Arg257 is an NADPH binding site. Residues Leu281 and Glu283 each coordinate NADPH.

The protein belongs to the NAD-dependent glycerol-3-phosphate dehydrogenase family.

Its subcellular location is the cytoplasm. It carries out the reaction sn-glycerol 3-phosphate + NAD(+) = dihydroxyacetone phosphate + NADH + H(+). It catalyses the reaction sn-glycerol 3-phosphate + NADP(+) = dihydroxyacetone phosphate + NADPH + H(+). It participates in membrane lipid metabolism; glycerophospholipid metabolism. Catalyzes the reduction of the glycolytic intermediate dihydroxyacetone phosphate (DHAP) to sn-glycerol 3-phosphate (G3P), the key precursor for phospholipid synthesis. The polypeptide is Glycerol-3-phosphate dehydrogenase [NAD(P)+] (Ehrlichia ruminantium (strain Gardel)).